The chain runs to 255 residues: Small ribosomal subunit protein uS2 (255 aa).

Residues 232-255 (ASGRDIGASEEAPIEPALEDEAGA) form a disordered region.

The protein belongs to the universal ribosomal protein uS2 family.

This Agrobacterium fabrum (strain C58 / ATCC 33970) (Agrobacterium tumefaciens (strain C58)) protein is Small ribosomal subunit protein uS2.